A 106-amino-acid polypeptide reads, in one-letter code: uncharacterized protein (106 aa).

The next 4 helical transmembrane spans lie at 3-23 (WFLL…MKYI), 29-49 (KWPI…LSQA), 50-70 (MIVL…SIGV), and 82-102 (FQLS…GLRL).

The protein belongs to the drug/metabolite transporter (DMT) superfamily. Small multidrug resistance (SMR) (TC 2.A.7.1) family.

It is found in the cell membrane. This is an uncharacterized protein from Bacillus subtilis (strain 168).